A 232-amino-acid polypeptide reads, in one-letter code: MDVRQMKIKAAELALSYVENGMRLGIGTGSTAEEFVRLLAEKVADGFKVQGVPTSERTARLCLELGVPLMSLDELPELDLTVDGADELDRHLTLIKGGGGALLREKIVAAASSRVIVIADETKLVETLGAYPLPIEINGFGGIATRISIEKAAAKLGLSGTIGLRMSGDDLFMTDGGHYILDASFGRIPDAVALSQALHAIPGVVEHGLFIGMASLAVVAGSDGARVIEPVA.

Substrate is bound by residues 28-31 (TGST), 83-86 (DGAD), and 96-99 (KGGG). The active-site Proton acceptor is E105. K123 contributes to the substrate binding site.

The protein belongs to the ribose 5-phosphate isomerase family. Homodimer.

The enzyme catalyses aldehydo-D-ribose 5-phosphate = D-ribulose 5-phosphate. The protein operates within carbohydrate degradation; pentose phosphate pathway; D-ribose 5-phosphate from D-ribulose 5-phosphate (non-oxidative stage): step 1/1. Functionally, catalyzes the reversible conversion of ribose-5-phosphate to ribulose 5-phosphate. The sequence is that of Ribose-5-phosphate isomerase A from Allorhizobium ampelinum (strain ATCC BAA-846 / DSM 112012 / S4) (Agrobacterium vitis (strain S4)).